Here is a 254-residue protein sequence, read N- to C-terminus: Triosephosphate isomerase (254 aa).

Residue 10–12 (NWK) coordinates substrate. H99 (electrophile) is an active-site residue. Residue E169 is the Proton acceptor of the active site. Substrate-binding positions include G175, S215, and 236–237 (GG).

The protein belongs to the triosephosphate isomerase family. In terms of assembly, homodimer.

The protein resides in the cytoplasm. It catalyses the reaction D-glyceraldehyde 3-phosphate = dihydroxyacetone phosphate. It participates in carbohydrate biosynthesis; gluconeogenesis. The protein operates within carbohydrate degradation; glycolysis; D-glyceraldehyde 3-phosphate from glycerone phosphate: step 1/1. Its function is as follows. Involved in the gluconeogenesis. Catalyzes stereospecifically the conversion of dihydroxyacetone phosphate (DHAP) to D-glyceraldehyde-3-phosphate (G3P). The sequence is that of Triosephosphate isomerase from Chlamydia abortus (strain DSM 27085 / S26/3) (Chlamydophila abortus).